The following is a 480-amino-acid chain: Glycogen synthase (480 aa).

Lysine 15 provides a ligand contact to ADP-alpha-D-glucose.

The protein belongs to the glycosyltransferase 1 family. Bacterial/plant glycogen synthase subfamily.

The enzyme catalyses [(1-&gt;4)-alpha-D-glucosyl](n) + ADP-alpha-D-glucose = [(1-&gt;4)-alpha-D-glucosyl](n+1) + ADP + H(+). The protein operates within glycan biosynthesis; glycogen biosynthesis. Functionally, synthesizes alpha-1,4-glucan chains using ADP-glucose. The chain is Glycogen synthase from Desulforamulus reducens (strain ATCC BAA-1160 / DSM 100696 / MI-1) (Desulfotomaculum reducens).